Reading from the N-terminus, the 264-residue chain is Stress response regulator protein 1 (264 aa).

Residues 50-74 form a disordered region; the sequence is IYSDCDNNKNNNDDDDDDDDYNKDT. Residues 62-74 are compositionally biased toward acidic residues; that stretch reads DDDDDDDDYNKDT. The region spanning 138-256 is the Response regulatory domain; the sequence is RFLIVDDNII…LDLIGGSIDD (119 aa). D189 is modified (4-aspartylphosphate).

In terms of biological role, required for stress adaptation, morphogenesis and virulence. The sequence is that of Stress response regulator protein 1 (SRR1) from Candida tropicalis (strain ATCC MYA-3404 / T1) (Yeast).